Reading from the N-terminus, the 67-residue chain is MCLRVKDEEPAQVYPEGPRRHHPSDVSTRQSVEKRINYMQNLQKEKRKLGKRFARPNPIPDTGILWT.

Disordered regions lie at residues Met-1 to Val-32 and Arg-47 to Thr-67. A coiled-coil region spans residues Ser-27 to Phe-53.

This chain is Coiled-coil domain-containing protein 179 (Ccdc179), found in Mus musculus (Mouse).